A 490-amino-acid polypeptide reads, in one-letter code: UDP-N-acetylmuramyl-tripeptide synthetase (490 aa).

Position 113–119 (113–119) interacts with ATP; it reads GTDGKTT. UDP-N-acetyl-alpha-D-muramoyl-L-alanyl-D-glutamate is bound by residues 158–159, S185, and R193; that span reads TT. Residue K225 is modified to N6-carboxylysine.

This sequence belongs to the MurCDEF family. MurE subfamily. Carboxylation is probably crucial for Mg(2+) binding and, consequently, for the gamma-phosphate positioning of ATP.

It is found in the cytoplasm. It participates in cell wall biogenesis; peptidoglycan biosynthesis. Functionally, catalyzes the addition of an amino acid to the nucleotide precursor UDP-N-acetylmuramoyl-L-alanyl-D-glutamate (UMAG) in the biosynthesis of bacterial cell-wall peptidoglycan. The protein is UDP-N-acetylmuramyl-tripeptide synthetase of Deinococcus radiodurans (strain ATCC 13939 / DSM 20539 / JCM 16871 / CCUG 27074 / LMG 4051 / NBRC 15346 / NCIMB 9279 / VKM B-1422 / R1).